Here is a 393-residue protein sequence, read N- to C-terminus: Pyrin and HIN domain-containing protein 1-like (393 aa).

The 87-residue stretch at 1–87 (MVNEYKRIVL…ANKLKNEKAK (87 aa)) folds into the Pyrin domain. Positions 82 to 188 (KNEKAKAKRK…TPTRSSSRIL (107 aa)) are disordered. Over residues 87–102 (KAKRKGKGKRKTAAKR) the composition is skewed to basic residues. Composition is skewed to polar residues over residues 108–118 (PSTSQPMSTTN) and 126–151 (GRSTPDTQVAQLSLPTASRRNQAIQI). Residues 152–169 (SPTIASSSGQTSSRSSET) are compositionally biased toward low complexity. Over residues 170-186 (LQSIIQSPETPTRSSSR) the composition is skewed to polar residues. One can recognise an HIN-200 domain in the interval 219–393 (NVPKEPSEEN…NPGDKLRLML (175 aa)).

This sequence belongs to the HIN-200 family.

The protein localises to the nucleus. The chain is Pyrin and HIN domain-containing protein 1-like from Mus musculus (Mouse).